The sequence spans 487 residues: Protein nucleotidyltransferase YdiU (487 aa).

The ATP site is built by G90, G92, R93, K113, D125, G126, R176, and R183. Residue D252 is the Proton acceptor of the active site. Residues N253 and D262 each contribute to the Mg(2+) site. ATP is bound at residue D262.

Belongs to the SELO family. It depends on Mg(2+) as a cofactor. The cofactor is Mn(2+).

It carries out the reaction L-seryl-[protein] + ATP = 3-O-(5'-adenylyl)-L-seryl-[protein] + diphosphate. The enzyme catalyses L-threonyl-[protein] + ATP = 3-O-(5'-adenylyl)-L-threonyl-[protein] + diphosphate. It catalyses the reaction L-tyrosyl-[protein] + ATP = O-(5'-adenylyl)-L-tyrosyl-[protein] + diphosphate. The catalysed reaction is L-histidyl-[protein] + UTP = N(tele)-(5'-uridylyl)-L-histidyl-[protein] + diphosphate. It carries out the reaction L-seryl-[protein] + UTP = O-(5'-uridylyl)-L-seryl-[protein] + diphosphate. The enzyme catalyses L-tyrosyl-[protein] + UTP = O-(5'-uridylyl)-L-tyrosyl-[protein] + diphosphate. Its function is as follows. Nucleotidyltransferase involved in the post-translational modification of proteins. It can catalyze the addition of adenosine monophosphate (AMP) or uridine monophosphate (UMP) to a protein, resulting in modifications known as AMPylation and UMPylation. This is Protein nucleotidyltransferase YdiU from Pseudomonas fluorescens (strain SBW25).